We begin with the raw amino-acid sequence, 624 residues long: Cell pattern formation-associated protein ust1 (624 aa).

Disordered regions lie at residues 1 to 24 (MSTA…APTG) and 43 to 99 (RSGS…GHSS). Positions 43–62 (RSGSVPASASGSAPGSASGS) are enriched in low complexity. A compositionally biased stretch (basic residues) spans 70-85 (QHHTGHHHYSAHHTHS). An HTH APSES-type domain is found at 233 to 339 (RVTTTLWEDE…PNIQSFLYHP (107 aa)). Positions 267–288 (GTKLLNVCGMSRGKRDGILKNE) form a DNA-binding region, H-T-H motif. Residues 352-362 (AQERQAQRQRA) are compositionally biased toward low complexity. Disordered stretches follow at residues 352 to 456 (AQER…QQQQ), 474 to 504 (QQAY…LNNS), and 538 to 624 (SWND…IHHE). Residues 369 to 391 (PGANGTSQAPPLMRANTTPSNGD) show a composition bias toward polar residues. Positions 392 to 426 (TSTFSSGLSSLGSWTGSHDQGHASAPTTAQPSPSS) are enriched in low complexity. Residues 427–451 (MHNGATQMHMSLSNHGTASPTYAQS) are compositionally biased toward polar residues. A compositionally biased stretch (basic and acidic residues) spans 571–587 (LDGDDLHSPDSSDDRLA). The segment covering 615-624 (VGNGSGIHHE) has biased composition (gly residues).

The protein belongs to the EFG1/PHD1/stuA family. Post-translationally, phosphorylated but is not a target of cAMP signaling.

Its subcellular location is the nucleus. In terms of biological role, transcription factor that regulates asexual reproduction. Binds the StuA-response elements (StRE) with the consensus sequence 5'-(A/T)CGCG(T/A)N(A/C)-3' at the promoters of target genes. Regulates dimorphism, virulence, and the sporulation program. Required for mating, gall induction, and sporogenesis in maize tissue. Regulates expression of the filament-down-regulated gene UM00205 and the teliospore-specific gene ssp1. This is Cell pattern formation-associated protein ust1 (ust1) from Mycosarcoma maydis (Corn smut fungus).